A 334-amino-acid polypeptide reads, in one-letter code: Aspartate carbamoyltransferase catalytic subunit (334 aa).

The carbamoyl phosphate site is built by Arg-71 and Thr-72. Lys-99 serves as a coordination point for L-aspartate. Residues Arg-121, His-151, and Gln-154 each contribute to the carbamoyl phosphate site. The L-aspartate site is built by Arg-184 and Arg-239. Carbamoyl phosphate is bound by residues Gly-280 and Pro-281.

The protein belongs to the aspartate/ornithine carbamoyltransferase superfamily. ATCase family. Heterododecamer (2C3:3R2) of six catalytic PyrB chains organized as two trimers (C3), and six regulatory PyrI chains organized as three dimers (R2).

It catalyses the reaction carbamoyl phosphate + L-aspartate = N-carbamoyl-L-aspartate + phosphate + H(+). The protein operates within pyrimidine metabolism; UMP biosynthesis via de novo pathway; (S)-dihydroorotate from bicarbonate: step 2/3. Catalyzes the condensation of carbamoyl phosphate and aspartate to form carbamoyl aspartate and inorganic phosphate, the committed step in the de novo pyrimidine nucleotide biosynthesis pathway. This is Aspartate carbamoyltransferase catalytic subunit from Pseudomonas savastanoi pv. phaseolicola (strain 1448A / Race 6) (Pseudomonas syringae pv. phaseolicola (strain 1448A / Race 6)).